A 158-amino-acid chain; its full sequence is Urease accessory protein UreE (158 aa).

It belongs to the UreE family.

It is found in the cytoplasm. In terms of biological role, involved in urease metallocenter assembly. Binds nickel. Probably functions as a nickel donor during metallocenter assembly. In Klebsiella pneumoniae (strain 342), this protein is Urease accessory protein UreE.